The following is a 229-amino-acid chain: Urease accessory protein UreF (229 aa).

This sequence belongs to the UreF family. UreD, UreF and UreG form a complex that acts as a GTP-hydrolysis-dependent molecular chaperone, activating the urease apoprotein by helping to assemble the nickel containing metallocenter of UreC. The UreE protein probably delivers the nickel.

It is found in the cytoplasm. Required for maturation of urease via the functional incorporation of the urease nickel metallocenter. The protein is Urease accessory protein UreF of Alcanivorax borkumensis (strain ATCC 700651 / DSM 11573 / NCIMB 13689 / SK2).